Here is a 521-residue protein sequence, read N- to C-terminus: Probable ATP-dependent RNA helicase Dbp45A (521 aa).

The short motif at asparagine 7–glutamine 35 is the Q motif element. The 172-residue stretch at isoleucine 38–glutamate 209 folds into the Helicase ATP-binding domain. Alanine 51–threonine 58 provides a ligand contact to ATP. Residues aspartate 157–aspartate 160 carry the DEAD box motif. One can recognise a Helicase C-terminal domain in the interval valine 237 to glutamate 386. Residues lysine 448–alanine 521 are disordered. Basic and acidic residues-rich tracts occupy residues glutamate 460–lysine 482 and leucine 502–alanine 521.

This sequence belongs to the DEAD box helicase family. DDX49/DBP8 subfamily.

The enzyme catalyses ATP + H2O = ADP + phosphate + H(+). Its function is as follows. Probable ATP-binding RNA helicase. This chain is Probable ATP-dependent RNA helicase Dbp45A (Dbp45A), found in Drosophila melanogaster (Fruit fly).